The following is a 276-amino-acid chain: Bis(5'-nucleosyl)-tetraphosphatase, symmetrical (276 aa).

This sequence belongs to the Ap4A hydrolase family.

The catalysed reaction is P(1),P(4)-bis(5'-adenosyl) tetraphosphate + H2O = 2 ADP + 2 H(+). In terms of biological role, hydrolyzes diadenosine 5',5'''-P1,P4-tetraphosphate to yield ADP. This Dechloromonas aromatica (strain RCB) protein is Bis(5'-nucleosyl)-tetraphosphatase, symmetrical.